The chain runs to 733 residues: 1,4-alpha-glucan branching enzyme GlgB (733 aa).

Residue Asp412 is the Nucleophile of the active site. Residue Glu467 is the Proton donor of the active site.

Belongs to the glycosyl hydrolase 13 family. GlgB subfamily. Monomer.

The catalysed reaction is Transfers a segment of a (1-&gt;4)-alpha-D-glucan chain to a primary hydroxy group in a similar glucan chain.. It participates in glycan biosynthesis; glycogen biosynthesis. In terms of biological role, catalyzes the formation of the alpha-1,6-glucosidic linkages in glycogen by scission of a 1,4-alpha-linked oligosaccharide from growing alpha-1,4-glucan chains and the subsequent attachment of the oligosaccharide to the alpha-1,6 position. The chain is 1,4-alpha-glucan branching enzyme GlgB from Burkholderia vietnamiensis (strain G4 / LMG 22486) (Burkholderia cepacia (strain R1808)).